The primary structure comprises 142 residues: Large ribosomal subunit protein uL16 (142 aa).

Belongs to the universal ribosomal protein uL16 family. In terms of assembly, part of the 50S ribosomal subunit.

In terms of biological role, binds 23S rRNA and is also seen to make contacts with the A and possibly P site tRNAs. This is Large ribosomal subunit protein uL16 from Thermosipho melanesiensis (strain DSM 12029 / CIP 104789 / BI429).